Reading from the N-terminus, the 974-residue chain is Hexokinase-1 (974 aa).

A disordered region spans residues 1–42; the sequence is MGWGAPLLSRMLHGPGQAGETSPVPERQSGSENPASEDRRPL. The mitochondrial-binding peptide (MBP) stretch occupies residues 57–66; it reads CQRGQAVDVE. 2 consecutive Hexokinase domains span residues 72–514 and 520–962; these read PLTE…MVTA and AEQH…LITA. ATP-binding positions include R86 and 140–145; that span reads DLGGSS. The tract at residues 129-263 is hexokinase small subdomain 1; the sequence is DGSEKGDFIA…DYDANIVAVV (135 aa). 140-147 contributes to the D-glucose 6-phosphate binding site; it reads DLGGSSFR. Residues S211, 228–229, and 264–265 contribute to the D-glucose site; these read TK and ND. Residues 264–503 form a hexokinase large subdomain 1 region; sequence NDTVGTMMTC…SDVRFLLSES (240 aa). D-glucose 6-phosphate-binding residues include D265 and T288. Residues N291, E316, and 347–350 contribute to the D-glucose site; that span reads QLFE. A Phosphoserine modification is found at S393. 469-471 is a binding site for D-glucose 6-phosphate; the sequence is DGS. 481 to 482 lines the ATP pocket; the sequence is RR. D-glucose 6-phosphate-binding positions include S505 and 588–592; that span reads DLGGT. Positions 577 to 711 are hexokinase small subdomain 2; it reads DGTEHGDFLA…EFDLDVVAVV (135 aa). 588 to 593 is an ATP binding site; sequence DLGGTN. D-glucose-binding positions include 659-660, 676-677, and 712-713; these read SF, TK, and ND. The segment at 712-951 is hexokinase large subdomain 2; it reads NDTVGTMMTC…CTVSFLLSED (240 aa). D-glucose 6-phosphate is bound by residues D713 and T736. ATP is bound at residue T736. D-glucose contacts are provided by residues 738–739, E764, and E798; that span reads SN. ATP is bound by residues 803-804, 840-844, and 919-923; these read GM, TKFLS, and TLYKL. Residues 917 to 919 and S953 contribute to the D-glucose 6-phosphate site; that span reads DGT.

This sequence belongs to the hexokinase family. In terms of assembly, monomer. Interacts with RABL2/RABL2A; binds preferentially to GTP-bound RABL2. Interacts with VDAC1. The HK1-VDAC1 complex interacts with ATF2. Interacts (via N-terminal spermatogenic cell-specific region) with PFKM isoform 2 and isoform 3 (via C-terminus). Interacts with SMAD5. Post-translationally, tyrosine-phosphorylated. As to expression, in rapidly growing tumor cells exhibiting high glucose catabolic rates, isoform HK1 is markedly elevated. Isoform HK1-SA, isoform HK1-SB and isoform HK1-SC are found only in spermatogenic cells. Isoform HK1-SC is detected in round spermatids, condensing spermatids and mature sperm where it is found in the head membranes, mitochondria of the midpiece and the fibrous sheath of the flagellum. Expressed within the principal piece and midpiece of sperm tail (at protein level).

The protein localises to the mitochondrion outer membrane. It localises to the cytoplasm. Its subcellular location is the cytosol. The protein resides in the membrane. It carries out the reaction a D-hexose + ATP = a D-hexose 6-phosphate + ADP + H(+). The catalysed reaction is D-fructose + ATP = D-fructose 6-phosphate + ADP + H(+). The enzyme catalyses D-glucose + ATP = D-glucose 6-phosphate + ADP + H(+). It catalyses the reaction D-mannose + ATP = D-mannose 6-phosphate + ADP + H(+). It carries out the reaction D-glucosamine + ATP = D-glucosamine 6-phosphate + ADP + H(+). Its pathway is carbohydrate metabolism; hexose metabolism. It participates in carbohydrate degradation; glycolysis; D-glyceraldehyde 3-phosphate and glycerone phosphate from D-glucose: step 1/4. Its activity is regulated as follows. Hexokinase is an allosteric enzyme inhibited by its product D-glucose 6-phosphate. Hexokinase activity is inhibited by N-acetyl-D-glucosamine. Catalyzes the phosphorylation of various hexoses, such as D-glucose, D-glucosamine, D-fructose, D-mannose and 2-deoxy-D-glucose, to hexose 6-phosphate (D-glucose 6-phosphate, D-glucosamine 6-phosphate, D-fructose 6-phosphate, D-mannose 6-phosphate and 2-deoxy-D-glucose 6-phosphate, respectively). Does not phosphorylate N-acetyl-D-glucosamine. Mediates the initial step of glycolysis by catalyzing phosphorylation of D-glucose to D-glucose 6-phosphate. Involved in innate immunity and inflammation by acting as a pattern recognition receptor for bacterial peptidoglycan. When released in the cytosol, N-acetyl-D-glucosamine component of bacterial peptidoglycan inhibits the hexokinase activity of HK1 and causes its dissociation from mitochondrial outer membrane, thereby activating the NLRP3 inflammasome. This is Hexokinase-1 from Mus musculus (Mouse).